The primary structure comprises 152 residues: Succinate dehydrogenase [ubiquinone] cytochrome b small subunit A, mitochondrial (152 aa).

A mitochondrion-targeting transit peptide spans 1 to 21; sequence MVTVLRLSSLCRANRASAFKS. The Mitochondrial matrix portion of the chain corresponds to 22–56; it reads LLIRPVPCLSQDLHTVQTSQIHTSQNHHAASKAAS. A helical transmembrane segment spans residues 57-78; the sequence is LHWTSERALSVALLGLLPAAYL. Topologically, residues 79 to 83 are mitochondrial intermembrane; that stretch reads YPGAA. Residues 84–104 form a helical membrane-spanning segment; that stretch reads VDYSLAAALTLHGHWGLGQVV. His95 is a binding site for heme b. Over 105 to 113 the chain is Mitochondrial matrix; sequence TDYVHGDAK. Tyr107 is an a ubiquinone binding site. The helical transmembrane segment at 114-135 threads the bilayer; it reads IKLANTSLFALSALTFAGLCYF. The Mitochondrial intermembrane segment spans residues 136–152; that stretch reads NYHDVGICKAVAMLWSL.

This sequence belongs to the CybS family. As to quaternary structure, component of complex II composed of four subunits: the flavoprotein (FP) SDHA, iron-sulfur protein (IP) SDHB, and a cytochrome b560 composed of SDHC and SDHD.

Its subcellular location is the mitochondrion inner membrane. The protein operates within carbohydrate metabolism; tricarboxylic acid cycle. Membrane-anchoring subunit of succinate dehydrogenase (SDH) that is involved in complex II of the mitochondrial electron transport chain and is responsible for transferring electrons from succinate to ubiquinone (coenzyme Q). SDH also oxidizes malate to the non-canonical enol form of oxaloacetate, enol-oxaloacetate. Enol-oxaloacetate, which is a potent inhibitor of the succinate dehydrogenase activity, is further isomerized into keto-oxaloacetate. This is Succinate dehydrogenase [ubiquinone] cytochrome b small subunit A, mitochondrial (sdhd-a) from Xenopus laevis (African clawed frog).